A 386-amino-acid polypeptide reads, in one-letter code: 3-ketoacyl-CoA thiolase (386 aa).

The active-site Acyl-thioester intermediate is Cys91. Active-site proton acceptor residues include His342 and Cys372.

It belongs to the thiolase-like superfamily. Thiolase family. In terms of assembly, heterotetramer of two alpha chains (FadB) and two beta chains (FadA).

Its subcellular location is the cytoplasm. The enzyme catalyses an acyl-CoA + acetyl-CoA = a 3-oxoacyl-CoA + CoA. The protein operates within lipid metabolism; fatty acid beta-oxidation. Functionally, catalyzes the final step of fatty acid oxidation in which acetyl-CoA is released and the CoA ester of a fatty acid two carbons shorter is formed. This chain is 3-ketoacyl-CoA thiolase, found in Colwellia psychrerythraea (strain 34H / ATCC BAA-681) (Vibrio psychroerythus).